We begin with the raw amino-acid sequence, 344 residues long: Ureide permease 3 (344 aa).

The Extracellular portion of the chain corresponds to 1–10 (MYVIESKGGT). The helical transmembrane segment at 11 to 31 (ITCMLLALLFLGTWPAIMTLT) threads the bilayer. Residues 32 to 42 (ERRGRLPQHTY) are Cytoplasmic-facing. The helical transmembrane segment at 43 to 63 (LDYTLTNLLAAVIIAFTLGEI) threads the bilayer. Residues 64-78 (SPSRPNFTTQLSQDN) are Extracellular-facing. Residues 79–99 (WPSVMFAMAGGIFLSLGTLAT) traverse the membrane as a helical segment. Topologically, residues 100–101 (QY) are cytoplasmic. The chain crosses the membrane as a helical span at residues 102–122 (AWAFVGLSVTEVITASIAVVI). The Extracellular portion of the chain corresponds to 123–136 (GTTLNYFLDDRINR). The chain crosses the membrane as a helical span at residues 137–157 (AEVLFPGVACFLIAVCFGSAV). The Cytoplasmic segment spans residues 158 to 208 (HKSNAADNKSKLQGFKSLETTSSFQMETSSIKEGKAKVGTADFLIEVEKQR). An ATP-binding site is contributed by 209-216 (AIKVFGKS). Residues 209–229 (AIKVFGKSTIIGLAITFFAVP) form a helical membrane-spanning segment. Over 230 to 235 (KLNVYT) the chain is Extracellular. The chain crosses the membrane as a helical span at residues 236–256 (AFFYFSISSFGVGLILNIIFL). Residues 257 to 278 (YWPILGLPRSSFKAYLNDWNGR) are Cytoplasmic-facing. A helical transmembrane segment spans residues 279–299 (GWSFLAGFLCGFGNGLQFMGG). Over 300–344 (QAAGYAAAGAVQIENKHFGGYCCLENTKDHQEKHIHFLSVCYLCS) the chain is Extracellular.

It belongs to the plant ureide permease (TC 2.A.7.19) family.

The protein resides in the membrane. Functionally, proton-coupled transporter that transports a wide spectrum of oxo derivatives of heterocyclic nitrogen compounds. This chain is Ureide permease 3, found in Arabidopsis thaliana (Mouse-ear cress).